Reading from the N-terminus, the 498-residue chain is Heat stress transcription factor A-3 (498 aa).

The interval 156–180 is disordered; it reads RRRSSPTQQSGLQPGSSGESGLDPE. Residues 160–174 are compositionally biased toward polar residues; that stretch reads SPTQQSGLQPGSSGE. Positions 180–235 form a coiled coil; that stretch reads ELNTLRREKSALLQEVTRLKQEHLQTIEQMSTLNQRLESAEDRQKQMVSFLAKLLQ. The hydrophobic repeat HR-A/B stretch occupies residues 184–234; the sequence is LRREKSALLQEVTRLKQEHLQTIEQMSTLNQRLESAEDRQKQMVSFLAKLL. The Nuclear localization signal motif lies at 258–263; that stretch reads KRKFLK. The segment at 263–291 is disordered; it reads KHVPHGNIDSGESSSQHTGESNLDFSPTS. The span at 272–291 shows a compositional bias: polar residues; it reads SGESSSQHTGESNLDFSPTS. The Nuclear export signal signature appears at 309-316; that stretch reads LEDGDLNL. The interval 356 to 382 is disordered; sequence LEIPPASGPRGQDPTIGRSKGKNVLSP.

The protein belongs to the HSF family. Class A subfamily. In terms of assembly, homotrimer. In terms of processing, exhibits temperature-dependent phosphorylation.

The protein resides in the cytoplasm. The protein localises to the nucleus. Functionally, transcriptional regulator that specifically binds DNA of heat shock promoter elements (HSE). This Oryza sativa subsp. japonica (Rice) protein is Heat stress transcription factor A-3 (HSFA3).